Here is a 254-residue protein sequence, read N- to C-terminus: Type II restriction enzyme HpaI (254 aa).

It catalyses the reaction Endonucleolytic cleavage of DNA to give specific double-stranded fragments with terminal 5'-phosphates.. Its function is as follows. A P subtype restriction enzyme that recognizes the double-stranded sequence 5'-GTTAAC-3' and cleaves after T-3. The chain is Type II restriction enzyme HpaI (hpaIR) from Haemophilus parainfluenzae.